Consider the following 37-residue polypeptide: Dolichyl-diphosphooligosaccharide--protein glycosyltransferase subunit 4 (37 aa).

Residues 1-4 lie on the Lumenal side of the membrane; the sequence is MITD. A helical transmembrane segment spans residues 5-25; sequence VQLAIFANMLGVSLFLLVVLY. Over 26–37 the chain is Cytoplasmic; that stretch reads HYVAVNNPKKQE.

It belongs to the OST4 family. In terms of assembly, component of the oligosaccharyltransferase (OST) complex. OST exists in two different complex forms which contain common core subunits RPN1, RPN2, OST48, OST4, DAD1 and TMEM258, either STT3A or STT3B as catalytic subunits, and form-specific accessory subunits. STT3A complex assembly occurs through the formation of 3 subcomplexes. Subcomplex 1 contains RPN1 and TMEM258, subcomplex 2 contains the STT3A-specific subunits STT3A, DC2/OSTC, and KCP2 as well as the core subunit OST4, and subcomplex 3 contains RPN2, DAD1, and OST48. The STT3A complex can form stable complexes with the Sec61 complex or with both the Sec61 and TRAP complexes.

It localises to the endoplasmic reticulum. Its subcellular location is the endoplasmic reticulum membrane. Its pathway is protein modification; protein glycosylation. Its function is as follows. Subunit of the oligosaccharyl transferase (OST) complex that catalyzes the initial transfer of a defined glycan (Glc(3)Man(9)GlcNAc(2) in eukaryotes) from the lipid carrier dolichol-pyrophosphate to an asparagine residue within an Asn-X-Ser/Thr consensus motif in nascent polypeptide chains, the first step in protein N-glycosylation. N-glycosylation occurs cotranslationally and the complex associates with the Sec61 complex at the channel-forming translocon complex that mediates protein translocation across the endoplasmic reticulum (ER). All subunits are required for a maximal enzyme activity. Specifically involved in maintaining stability of STT3A-containing OST complexes. The polypeptide is Dolichyl-diphosphooligosaccharide--protein glycosyltransferase subunit 4 (Homo sapiens (Human)).